The following is a 1026-amino-acid chain: Multidrug resistance protein MdtC (1026 aa).

Transmembrane regions (helical) follow at residues isoleucine 15–alanine 35, glutamate 333–leucine 353, leucine 360–cysteine 380, leucine 387–leucine 407, valine 431–leucine 451, phenylalanine 463–proline 483, leucine 528–proline 548, leucine 853–serine 873, leucine 897–valine 917, proline 953–glycine 973, and isoleucine 984–valine 1004.

This sequence belongs to the resistance-nodulation-cell division (RND) (TC 2.A.6) family. MdtC subfamily. In terms of assembly, part of a tripartite efflux system composed of MdtA, MdtB and MdtC. MdtC forms a heteromultimer with MdtB.

It localises to the cell inner membrane. The polypeptide is Multidrug resistance protein MdtC (Salmonella choleraesuis (strain SC-B67)).